Consider the following 227-residue polypeptide: LexA repressor (227 aa).

The H-T-H motif DNA-binding region spans 25–45 (FDEMKDALDLRSKSGIHRLIT). Catalysis depends on for autocatalytic cleavage activity residues S148 and K186.

It belongs to the peptidase S24 family. In terms of assembly, homodimer.

It catalyses the reaction Hydrolysis of Ala-|-Gly bond in repressor LexA.. Represses a number of genes involved in the response to DNA damage (SOS response), including recA and lexA. In the presence of single-stranded DNA, RecA interacts with LexA causing an autocatalytic cleavage which disrupts the DNA-binding part of LexA, leading to derepression of the SOS regulon and eventually DNA repair. The protein is LexA repressor of Cereibacter sphaeroides (strain ATCC 17029 / ATH 2.4.9) (Rhodobacter sphaeroides).